The chain runs to 277 residues: tRNA pseudouridine synthase A (277 aa).

The active-site Nucleophile is the Asp57. Tyr115 is a substrate binding site.

It belongs to the tRNA pseudouridine synthase TruA family. Homodimer.

It carries out the reaction uridine(38/39/40) in tRNA = pseudouridine(38/39/40) in tRNA. Its function is as follows. Formation of pseudouridine at positions 38, 39 and 40 in the anticodon stem and loop of transfer RNAs. This Nitratidesulfovibrio vulgaris (strain DSM 19637 / Miyazaki F) (Desulfovibrio vulgaris) protein is tRNA pseudouridine synthase A.